The primary structure comprises 349 residues: MTSIYHDDDDHLTASGKDLWSNFCVLVDAAVMLYEEEEEEQRRKIVSEEEEEFQKRIFCLFPRKTRSSLVKRQQNLIRVSTSSSLIDLNQFPTDSEIEDPQNHLQGLSSSCFIAANSETKTLQNPSSEPCSSLGLFGHKTAEYQKTETKDPPNPNFPCTMSLCLMENTSRKRRAVEQRKRSGGVKKANVAPFSQTARETPEWLVKVMTNMKEAKDAKLIFEKTLFVTDVNPTKNRLSMPFNNLLRNDFLTSVESIIINEDINNNNKIGVGAILVDQRCKKWGVMLKRWEMKKESGKGSWSYNLICGWNDIVEANRLKEGDNITLWSFRCCGILCFAMEQSSSSLALCLC.

A DNA-binding region (TF-B3) is located at residues 240-341; that stretch reads FNNLLRNDFL…ILCFAMEQSS (102 aa).

It is found in the nucleus. This is B3 domain-containing protein At5g24050 from Arabidopsis thaliana (Mouse-ear cress).